The sequence spans 885 residues: Leucine--tRNA ligase (885 aa).

The short motif at 46-56 is the 'HIGH' region element; the sequence is PYPSGALHMGH. The short motif at 638–642 is the 'KMSKS' region element; sequence KMSKS. Lys641 is a binding site for ATP.

The protein belongs to the class-I aminoacyl-tRNA synthetase family.

Its subcellular location is the cytoplasm. The catalysed reaction is tRNA(Leu) + L-leucine + ATP = L-leucyl-tRNA(Leu) + AMP + diphosphate. The sequence is that of Leucine--tRNA ligase from Xanthomonas campestris pv. campestris (strain B100).